A 217-amino-acid polypeptide reads, in one-letter code: Protein-L-isoaspartate O-methyltransferase (217 aa).

Residue S61 is part of the active site.

This sequence belongs to the methyltransferase superfamily. L-isoaspartyl/D-aspartyl protein methyltransferase family.

The protein resides in the cytoplasm. It catalyses the reaction [protein]-L-isoaspartate + S-adenosyl-L-methionine = [protein]-L-isoaspartate alpha-methyl ester + S-adenosyl-L-homocysteine. In terms of biological role, catalyzes the methyl esterification of L-isoaspartyl residues in peptides and proteins that result from spontaneous decomposition of normal L-aspartyl and L-asparaginyl residues. It plays a role in the repair and/or degradation of damaged proteins. This is Protein-L-isoaspartate O-methyltransferase from Syntrophotalea carbinolica (strain DSM 2380 / NBRC 103641 / GraBd1) (Pelobacter carbinolicus).